Here is a 191-residue protein sequence, read N- to C-terminus: Cell division protein SepF (191 aa).

A compositionally biased stretch (low complexity) spans 151–165; it reads SSSPEEASPSSVPTE. The segment at 151 to 191 is disordered; the sequence is SSSPEEASPSSVPTENTPQYSLGKNTTPEPAWGNSKLSAYS. Polar residues predominate over residues 166-178; sequence NTPQYSLGKNTTP.

It belongs to the SepF family. In terms of assembly, homodimer. Interacts with FtsZ.

Its subcellular location is the cytoplasm. Its function is as follows. Cell division protein that is part of the divisome complex and is recruited early to the Z-ring. Probably stimulates Z-ring formation, perhaps through the cross-linking of FtsZ protofilaments. Its function overlaps with FtsA. This Prochlorococcus marinus (strain MIT 9215) protein is Cell division protein SepF.